A 119-amino-acid polypeptide reads, in one-letter code: Protein TusC (119 aa).

Belongs to the DsrF/TusC family. In terms of assembly, heterohexamer, formed by a dimer of trimers. The hexameric TusBCD complex contains 2 copies each of TusB, TusC and TusD. The TusBCD complex interacts with TusE.

The protein localises to the cytoplasm. In terms of biological role, part of a sulfur-relay system required for 2-thiolation of 5-methylaminomethyl-2-thiouridine (mnm(5)s(2)U) at tRNA wobble positions. The polypeptide is Protein TusC (Buchnera aphidicola subsp. Schizaphis graminum (strain Sg)).